Reading from the N-terminus, the 35-residue chain is Somatostatin (35 aa).

An intrachain disulfide couples C24 to C35.

It belongs to the somatostatin family.

It is found in the secreted. Somatostatin inhibits the release of somatotropin. In Lampetra fluviatilis (European river lamprey), this protein is Somatostatin (sst).